We begin with the raw amino-acid sequence, 176 residues long: HTH-type transcriptional regulator DctR (176 aa).

In terms of domain architecture, HTH luxR-type spans 109–174 (VPEANVSLSR…ELVRHQHIDY (66 aa)). Positions 133 to 152 (TEDILEKLKISLKTFYCHKH) form a DNA-binding region, H-T-H motif.

Functionally, may act as a transcriptional regulator of dctA. The protein is HTH-type transcriptional regulator DctR (dctR) of Shigella flexneri.